A 177-amino-acid polypeptide reads, in one-letter code: UPF0114 protein HPAG1_0183 (177 aa).

Transmembrane regions (helical) follow at residues 15–35, 54–74, 102–122, and 145–165; these read WLLA…GYVF, LVLS…VLMV, FNAL…IFLL, and PIFW…LAAV.

This sequence belongs to the UPF0114 family.

The protein resides in the cell membrane. The polypeptide is UPF0114 protein HPAG1_0183 (Helicobacter pylori (strain HPAG1)).